Here is a 385-residue protein sequence, read N- to C-terminus: Putative F-box protein At1g49610 (385 aa).

The F-box domain occupies valine 25–cysteine 73.

This is Putative F-box protein At1g49610 from Arabidopsis thaliana (Mouse-ear cress).